Reading from the N-terminus, the 119-residue chain is Protein FAM24A-like (119 aa).

An N-terminal signal peptide occupies residues 1–40 (MYKPFDLRTIITIIIGCGILTAMFLLIGLVLCLYSKISKA).

The protein belongs to the FAM24 family.

The protein localises to the secreted. The sequence is that of Protein FAM24A-like from Mus musculus (Mouse).